We begin with the raw amino-acid sequence, 139 residues long: Large ribosomal subunit protein uL16 (139 aa).

Basic residues predominate over residues 1–11 (MLQPKRTKYRK). A disordered region spans residues 1–30 (MLQPKRTKYRKPFLQSHDKRKAHKGNKVSF).

It belongs to the universal ribosomal protein uL16 family. In terms of assembly, part of the 50S ribosomal subunit.

Binds 23S rRNA and is also seen to make contacts with the A and possibly P site tRNAs. This is Large ribosomal subunit protein uL16 from Mycoplasmopsis synoviae (strain 53) (Mycoplasma synoviae).